Reading from the N-terminus, the 61-residue chain is Probable tautomerase SSP1389 (61 aa).

P2 serves as the catalytic Proton acceptor; via imino nitrogen.

Belongs to the 4-oxalocrotonate tautomerase family.

This is Probable tautomerase SSP1389 from Staphylococcus saprophyticus subsp. saprophyticus (strain ATCC 15305 / DSM 20229 / NCIMB 8711 / NCTC 7292 / S-41).